Reading from the N-terminus, the 169-residue chain is Ribosome maturation factor RimP (169 aa).

Belongs to the RimP family.

It is found in the cytoplasm. In terms of biological role, required for maturation of 30S ribosomal subunits. The polypeptide is Ribosome maturation factor RimP (Coprothermobacter proteolyticus (strain ATCC 35245 / DSM 5265 / OCM 4 / BT)).